We begin with the raw amino-acid sequence, 620 residues long: MDSHTLIQALIYLGSAALIVPIAVRLGLGSVLGYLIAGCIIGPWGLRLVTDAESILHFAEIGVVLMLFIIGLELDPQRLWKLRAAVFGGGALQMVICGGLLGLFCMLLGLHWQVAELIGMTLALSSTAIAMQAMNERNLMVTQMGRSAFAVLLFQDIAAIPLVAMIPLLATSSASTTMGAFALSALKVAGALVLVVLLGRYVTRPALRFVARSGLREVFSAVALFLVFGFGLLLEEVGLSMAMGAFLAGVLLASSEYRHALESDIEPFKGLLLGLFFIGVGMSIDFGTLLENPLRIVILLLGFLIIKIAMLWLIARPLQVPNKQRRWFAVLLGQGSEFAFVVFGTAQMANVLEPEWAKSLTLAVALSMAATPILLVILNRLEQSSTEEAREADEIDEEQPRVIIAGFGRFGQITGRLLLSSGVKMVVLDHDPDHIETLRKFGMKVFYGDATRMDLLESAGAAKAEVLINAIDDPQTNLQLTEMVKEHFPHLQIIARARDVDHYIRLRQAGVEKPERETFEGALKTGRLALESLGLGPYEARERADVFRRFNIQMVEEMAMVENDTKARAAVYKRTSAMLSEIITEDREHLSLIQRHGWQGTEEGKHTGNMADEPETKPSS.

12 helical membrane passes run 4–24 (HTLIQALIYLGSAALIVPIAV), 26–46 (LGLGSVLGYLIAGCIIGPWGL), 54–74 (SILHFAEIGVVLMLFIIGLEL), 90–110 (GALQMVICGGLLGLFCMLLGL), 114–134 (VAELIGMTLALSSTAIAMQAM), 149–169 (FAVLLFQDIAAIPLVAMIPLL), 178–198 (MGAFALSALKVAGALVLVVLL), 218–238 (VFSAVALFLVFGFGLLLEEVG), 270–290 (GLLLGLFFIGVGMSIDFGTLL), 294–314 (LRIVILLLGFLIIKIAMLWLI), 327–347 (WFAVLLGQGSEFAFVVFGTAQ), and 359–379 (SLTLAVALSMAATPILLVILN). Residues 399-518 (QPRVIIAGFG…AGVEKPERET (120 aa)) enclose the RCK N-terminal domain. Residues 597 to 620 (GWQGTEEGKHTGNMADEPETKPSS) form a disordered region.

It belongs to the monovalent cation:proton antiporter 2 (CPA2) transporter (TC 2.A.37) family. KefC subfamily. In terms of assembly, homodimer. Interacts with the regulatory subunit KefF.

Its subcellular location is the cell inner membrane. Its function is as follows. Pore-forming subunit of a potassium efflux system that confers protection against electrophiles. Catalyzes K(+)/H(+) antiport. This chain is Glutathione-regulated potassium-efflux system protein KefC, found in Shigella sonnei (strain Ss046).